A 175-amino-acid polypeptide reads, in one-letter code: Cytidylate kinase (175 aa).

7–15 (GLPGSGTTT) is an ATP binding site.

The protein belongs to the cytidylate kinase family. Type 2 subfamily.

It is found in the cytoplasm. It carries out the reaction CMP + ATP = CDP + ADP. It catalyses the reaction dCMP + ATP = dCDP + ADP. In Methanococcoides burtonii (strain DSM 6242 / NBRC 107633 / OCM 468 / ACE-M), this protein is Cytidylate kinase.